A 134-amino-acid chain; its full sequence is Profilin-3 (134 aa).

Cys13 and Cys118 are oxidised to a cystine. The Involved in PIP2 interaction motif lies at 84 to 100 (AVIRGKKGSGGITIKKT). Thr114 carries the phosphothreonine modification.

Belongs to the profilin family. In terms of assembly, occurs in many kinds of cells as a complex with monomeric actin in a 1:1 ratio. Post-translationally, phosphorylated by MAP kinases.

It localises to the cytoplasm. Its subcellular location is the cytoskeleton. Functionally, binds to actin and affects the structure of the cytoskeleton. At high concentrations, profilin prevents the polymerization of actin, whereas it enhances it at low concentrations. The protein is Profilin-3 of Olea europaea (Common olive).